Here is a 72-residue protein sequence, read N- to C-terminus: Large ribosomal subunit protein bL31 (72 aa).

Cys-16, Cys-18, Cys-37, and Cys-40 together coordinate Zn(2+).

It belongs to the bacterial ribosomal protein bL31 family. Type A subfamily. As to quaternary structure, part of the 50S ribosomal subunit. Requires Zn(2+) as cofactor.

Functionally, binds the 23S rRNA. The sequence is that of Large ribosomal subunit protein bL31 from Buchnera aphidicola subsp. Acyrthosiphon pisum (strain APS) (Acyrthosiphon pisum symbiotic bacterium).